We begin with the raw amino-acid sequence, 305 residues long: UDP-3-O-acyl-N-acetylglucosamine deacetylase (305 aa).

3 residues coordinate Zn(2+): H78, H237, and D241. Residue H264 is the Proton donor of the active site.

This sequence belongs to the LpxC family. Requires Zn(2+) as cofactor.

It catalyses the reaction a UDP-3-O-[(3R)-3-hydroxyacyl]-N-acetyl-alpha-D-glucosamine + H2O = a UDP-3-O-[(3R)-3-hydroxyacyl]-alpha-D-glucosamine + acetate. The protein operates within glycolipid biosynthesis; lipid IV(A) biosynthesis; lipid IV(A) from (3R)-3-hydroxytetradecanoyl-[acyl-carrier-protein] and UDP-N-acetyl-alpha-D-glucosamine: step 2/6. Its function is as follows. Catalyzes the hydrolysis of UDP-3-O-myristoyl-N-acetylglucosamine to form UDP-3-O-myristoylglucosamine and acetate, the committed step in lipid A biosynthesis. The polypeptide is UDP-3-O-acyl-N-acetylglucosamine deacetylase (Burkholderia pseudomallei (strain 668)).